The sequence spans 307 residues: L-lactate dehydrogenase (307 aa).

Residues Val-13, Asp-34, Arg-39, Tyr-64, and 78–79 (GV) each bind NAD(+). Arg-87 provides a ligand contact to substrate. Ser-100 lines the NAD(+) pocket. 119–122 (NPVD) serves as a coordination point for substrate. Thr-142 contributes to the NAD(+) binding site. 147-150 (DSAR) provides a ligand contact to substrate. The active-site Proton acceptor is His-174. Thr-224 provides a ligand contact to substrate.

It belongs to the LDH/MDH superfamily. LDH family. Homotetramer.

It is found in the cytoplasm. The catalysed reaction is (S)-lactate + NAD(+) = pyruvate + NADH + H(+). Its pathway is fermentation; pyruvate fermentation to lactate; (S)-lactate from pyruvate: step 1/1. In terms of biological role, catalyzes the conversion of lactate to pyruvate. In Lactobacillus delbrueckii subsp. bulgaricus (strain ATCC BAA-365 / Lb-18), this protein is L-lactate dehydrogenase.